A 417-amino-acid polypeptide reads, in one-letter code: Laccase-like protein claX (417 aa).

It belongs to the multicopper oxidase family.

In terms of biological role, laccase-like protein; part of the gene cluster that mediates the biosynthesis of clavilactone A, a meroterpenoid that features a unique benzo-fused ten-membered carbocyclic ring unit with an alpha,beta-epoxy-gamma-lactone moiety, forming an intriguing 10/5/3 tricyclic nested skeleton. ClaR, ClaS and ClaT are sufficient to produce clavilactone A and the function of claX, if any, has still to be identified. The biosynthesis begins with the prenyltransferase claS that transfers geranyl pyrophosphate (GPP) to hydroquinone to produces geranylhydroquinon. The cytochrome P450 monooxygenase claR then catalyzes the diradical coupling reaction between the intramolecular hydroquinone and allyl moieties to form the benzo-fused ten-membered carbocyclic ring unit of wigantol. Finally the cytochrome P450 monooxygenase claT exquisitely and stereoselectively assembles the alpha,beta-epoxy-gamma-lactone moiety, producing clavilactone A via arnebinol A. This Ampulloclitocybe clavipes (Club foot) protein is Laccase-like protein claX.